The sequence spans 557 residues: Potassium-transporting ATPase potassium-binding subunit (557 aa).

The next 12 helical transmembrane spans lie at 5–25 (GFLL…PLGS), 63–83 (LCAI…MLLG), 132–152 (GLTV…FALI), 170–190 (LLRI…LFFI), 253–273 (FVQM…FGEV), 283–303 (LLWA…WAEV), 329–349 (VLVS…AVIA), 356–376 (ALGG…FGGV), 379–399 (GLYG…LMIG), 416–436 (LTAL…ALAM), 484–504 (LLAF…MAIA), and 526–546 (LFVG…FIPA).

Belongs to the KdpA family. In terms of assembly, the system is composed of three essential subunits: KdpA, KdpB and KdpC.

The protein resides in the cell inner membrane. Functionally, part of the high-affinity ATP-driven potassium transport (or Kdp) system, which catalyzes the hydrolysis of ATP coupled with the electrogenic transport of potassium into the cytoplasm. This subunit binds the periplasmic potassium ions and delivers the ions to the membrane domain of KdpB through an intramembrane tunnel. The protein is Potassium-transporting ATPase potassium-binding subunit of Escherichia coli O139:H28 (strain E24377A / ETEC).